The primary structure comprises 1392 residues: DNA-directed RNA polymerase subunit beta'' (1392 aa).

Cys224, Cys295, Cys302, and Cys305 together coordinate Zn(2+).

It belongs to the RNA polymerase beta' chain family. RpoC2 subfamily. In plastids the minimal PEP RNA polymerase catalytic core is composed of four subunits: alpha, beta, beta', and beta''. When a (nuclear-encoded) sigma factor is associated with the core the holoenzyme is formed, which can initiate transcription. Zn(2+) serves as cofactor.

It is found in the plastid. The protein resides in the chloroplast. The catalysed reaction is RNA(n) + a ribonucleoside 5'-triphosphate = RNA(n+1) + diphosphate. DNA-dependent RNA polymerase catalyzes the transcription of DNA into RNA using the four ribonucleoside triphosphates as substrates. In Solanum lycopersicum (Tomato), this protein is DNA-directed RNA polymerase subunit beta''.